A 125-amino-acid polypeptide reads, in one-letter code: Large ribosomal subunit protein bL19 (125 aa).

Belongs to the bacterial ribosomal protein bL19 family.

Functionally, this protein is located at the 30S-50S ribosomal subunit interface and may play a role in the structure and function of the aminoacyl-tRNA binding site. The protein is Large ribosomal subunit protein bL19 of Wolbachia sp. subsp. Brugia malayi (strain TRS).